We begin with the raw amino-acid sequence, 156 residues long: Translationally controlled tumor protein 2 (156 aa).

A TCTP domain is found at 1–156 (MLVYQDILTG…LAYGLKEIKC (156 aa)).

This sequence belongs to the TCTP family. As to expression, expressed in stems, cauline leaves, minor veins of rosette leaves, roots, lateral root primordia, vascular tissues of petioles and inflorescences, base of siliques, papillae and ovules. Not detected in root meristems, anthers or seeds. Expressed in stomata, trichomes and root cortex.

It localises to the nucleus. The protein localises to the cytoplasm. Regulates proliferation. Induces whole plant regeneration when expressed in heterologous systems. Involved in root growth and lateral root development, with a probable role in cell reprogramming. The long-distance transport of TCTP RNA and/or protein in plants may have an important role in regulation of growth and development. The chain is Translationally controlled tumor protein 2 from Arabidopsis thaliana (Mouse-ear cress).